A 159-amino-acid chain; its full sequence is Peptide deformylase (159 aa).

The Fe cation site is built by Cys-88 and His-130. Residue Glu-131 is part of the active site. His-134 provides a ligand contact to Fe cation.

Belongs to the polypeptide deformylase family. It depends on Fe(2+) as a cofactor.

It carries out the reaction N-terminal N-formyl-L-methionyl-[peptide] + H2O = N-terminal L-methionyl-[peptide] + formate. Removes the formyl group from the N-terminal Met of newly synthesized proteins. Requires at least a dipeptide for an efficient rate of reaction. N-terminal L-methionine is a prerequisite for activity but the enzyme has broad specificity at other positions. This chain is Peptide deformylase, found in Caldanaerobacter subterraneus subsp. tengcongensis (strain DSM 15242 / JCM 11007 / NBRC 100824 / MB4) (Thermoanaerobacter tengcongensis).